A 496-amino-acid chain; its full sequence is Polyphosphate:AMP phosphotransferase (496 aa).

PPK2 stretches follow at residues 11–234 (IDKD…LQAA) and 269–495 (LDKD…YKKD).

This sequence belongs to the polyphosphate kinase 2 (PPK2) family. Class II subfamily. In terms of assembly, homodimer. Mg(2+) serves as cofactor.

The catalysed reaction is [phosphate](n) + ADP = [phosphate](n+1) + AMP. In terms of biological role, uses inorganic polyphosphate (polyP) as a donor to convert AMP to ADP. Can also convert GMP to GDP, with lower efficiency. Cannot dephosphorylate ADP in the presence of polyP. This is Polyphosphate:AMP phosphotransferase from Pseudomonas aeruginosa (strain ATCC 15692 / DSM 22644 / CIP 104116 / JCM 14847 / LMG 12228 / 1C / PRS 101 / PAO1).